Here is a 125-residue protein sequence, read N- to C-terminus: Large ribosomal subunit protein bL12 (125 aa).

The protein belongs to the bacterial ribosomal protein bL12 family. Homodimer. Part of the ribosomal stalk of the 50S ribosomal subunit. Forms a multimeric L10(L12)X complex, where L10 forms an elongated spine to which 2 to 4 L12 dimers bind in a sequential fashion. Binds GTP-bound translation factors.

Its function is as follows. Forms part of the ribosomal stalk which helps the ribosome interact with GTP-bound translation factors. Is thus essential for accurate translation. In Campylobacter jejuni (strain RM1221), this protein is Large ribosomal subunit protein bL12.